We begin with the raw amino-acid sequence, 205 residues long: Ribosomal RNA small subunit methyltransferase G (205 aa).

S-adenosyl-L-methionine is bound by residues Gly76, Leu81, 127 to 128, and Arg140; that span reads IE.

The protein belongs to the methyltransferase superfamily. RNA methyltransferase RsmG family.

It is found in the cytoplasm. It catalyses the reaction guanosine(527) in 16S rRNA + S-adenosyl-L-methionine = N(7)-methylguanosine(527) in 16S rRNA + S-adenosyl-L-homocysteine. Specifically methylates the N7 position of guanine in position 527 of 16S rRNA. This Francisella tularensis subsp. tularensis (strain FSC 198) protein is Ribosomal RNA small subunit methyltransferase G.